We begin with the raw amino-acid sequence, 422 residues long: Keratin, type II cytoskeletal 80 (422 aa).

Residues 1–82 (MACRSCVVGF…DPAIQQQKNN (82 aa)) form a head region. Residue Ser45 is modified to Phosphoserine. The interval 83-118 (EKEEMKVLNDKFASLIGKVQALEQRNQLLETRWHFL) is coil 1A. An IF rod domain is found at 83 to 394 (EKEEMKVLND…KLMEGEESRM (312 aa)). The interval 119–135 (QSQDSATFDLGHLYEEY) is linker 1. The tract at residues 136-227 (QGRLQEELRK…SIYEQELKDL (92 aa)) is coil 1B. The interval 228–251 (AAQLKDVSVTVGMDSRCHIDLSGI) is linker 12. The coil 2 stretch occupies residues 252-390 (VEEVKAQYDA…ATYRKLMEGE (139 aa)). Positions 391-422 (ESRMDMPSATVVSAVQARCRTAPTLPHPLCSL) are tail.

It belongs to the intermediate filament family. In terms of assembly, heterotetramer of two type I and two type II keratins.

The protein is Keratin, type II cytoskeletal 80 (KRT80) of Bos taurus (Bovine).